The following is a 573-amino-acid chain: Delta 8-(E)-sphingolipid desaturase (573 aa).

In terms of domain architecture, Cytochrome b5 heme-binding spans 2-77 (SRVLSRRDIA…FKIWKIGRID (76 aa)). Residues histidine 37 and histidine 60 each contribute to the heme site. The helical transmembrane segment at 228–248 (LFGISFYLLSLKWFAISAICL) threads the bilayer. The Histidine box-1 signature appears at 260–264 (HDAGH). A helical membrane pass occupies residues 273 to 293 (VDNIIGMTVASWIGGLSLGWW). Positions 297 to 301 (HDVHH) match the Histidine box-2 motif. 3 helical membrane passes run 353-372 (YLYY…LSWM), 393-413 (LAEL…KQMP), and 422-442 (VMIS…SHFA). The short motif at 481–485 (QVIHH) is the Histidine box-3 element.

The protein belongs to the fatty acid desaturase type 1 family.

It localises to the membrane. The catalysed reaction is an N-acylsphing-4-enine + 2 Fe(II)-[cytochrome b5] + O2 + 2 H(+) = a (4E,8E)-4-sphinga-4,8-dienine ceramide + 2 Fe(III)-[cytochrome b5] + 2 H2O. It participates in lipid metabolism; sphingolipid metabolism. In terms of biological role, delta(8)-fatty-acid desaturase which introduces a double bond at the 8-position in the long-chain base (LCB) of ceramides. Required for the formation of the di-unsaturated sphingoid base (E,E)-sphinga-4,8-dienine during glucosylceramide (GluCer) biosynthesis. This is Delta 8-(E)-sphingolipid desaturase from Kluyveromyces lactis (Yeast).